The sequence spans 359 residues: 4-galactosyl-N-acetylglucosaminide 3-alpha-L-fucosyltransferase 9 (359 aa).

The Cytoplasmic portion of the chain corresponds to 1-11; the sequence is MTSASKGILRP. The helical; Signal-anchor for type II membrane protein transmembrane segment at 12–32 threads the bilayer; that stretch reads FLIVCIILGCFMACLLIYIKP. The Lumenal segment spans residues 33–359; it reads TNSWIFSPME…VGNLEKWFWN (327 aa). Asn62 carries N-linked (GlcNAc...) asparagine glycosylation. Residues 63 to 168 are acceptor-binding; sequence ETTILIWVWP…RRDSDIQVPY (106 aa). Position 75 (Gln75) interacts with a beta-D-galactosyl-(1-&gt;4)-N-acetyl-beta-D-glucosaminyl derivative. Disulfide bonds link Cys82/Cys335, Cys91/Cys338, and Cys190/Cys238. Asn101 carries N-linked (GlcNAc...) asparagine glycosylation. A beta-D-galactosyl-(1-&gt;4)-N-acetyl-beta-D-glucosaminyl derivative is bound at residue Glu137. The active-site Nucleophile is the Glu137. Glu137 provides a ligand contact to GDP-beta-L-fucose. Asn153 carries an N-linked (GlcNAc...) asparagine glycan. The GDP-beta-L-fucose site is built by Tyr168, Val192, Ser194, Asn195, Arg202, Val226, Tyr241, Asn246, Tyr252, Glu255, and Lys256. The segment at 169–326 is donor-binding; it reads GFLTVSTNPF…NWRKDFTVNL (158 aa). The tract at residues 327-359 is acceptor-binding; that stretch reads PRFWESHACLACDHVKRHQEYKSVGNLEKWFWN.

This sequence belongs to the glycosyltransferase 10 family. Homodimer. In terms of processing, N-glycosylated with complex-type N-glycans.

The protein localises to the golgi apparatus. It is found in the trans-Golgi network membrane. Its subcellular location is the golgi apparatus membrane. It carries out the reaction a beta-D-galactosyl-(1-&gt;4)-N-acetyl-beta-D-glucosaminyl derivative + GDP-beta-L-fucose = a beta-D-galactosyl-(1-&gt;4)-[alpha-L-fucosyl-(1-&gt;3)]-N-acetyl-beta-D-glucosaminyl derivative + GDP + H(+). The enzyme catalyses an alpha-Neu5Ac-(2-&gt;3)-beta-D-Gal-(1-&gt;4)-beta-D-GlcNAc-(1-&gt;3)-beta-D-Gal-(1-&gt;4)-beta-D-GlcNAc derivative + GDP-beta-L-fucose = an alpha-Neu5Ac-(2-&gt;3)-beta-D-Gal-(1-&gt;4)-beta-D-GlcNAc-(1-&gt;3)-beta-D-Gal-(1-&gt;4)-[alpha-L-Fuc-(1-&gt;3)]-beta-D-GlcNAc derivative + GDP + H(+). The catalysed reaction is alpha-N-glycoloylneuraminosyl-(2-&gt;3)-beta-D-galactosyl-(1-&gt;4)-N-acetyl-beta-D-glucosaminyl-(1-&gt;3)-beta-D-galactosyl-(1-&gt;4)-N-acetyl-beta-D-glucosaminyl-(1-&gt;3)-beta-D-galactosyl-(1-&gt;4)-beta-D-glucosyl-(1&lt;-&gt;1')-ceramide + GDP-beta-L-fucose = alpha-N-glycoloylneuraminosyl-(2-&gt;3)-beta-D-galactosyl-(1-&gt;4)-N-acetyl-beta-D-glucosaminyl-(1-&gt;3)-beta-D-galactosyl-(1-&gt;4)-[alpha-L-fucosyl-(1-&gt;3)]-N-acetyl-beta-D-glucosaminyl-(1-&gt;3)-beta-D-galactosyl-(1-&gt;4)-beta-D-glucosyl-(1&lt;-&gt;1')-ceramide + GDP + H(+). It catalyses the reaction alpha-D-galactosyl-(1-&gt;3)-beta-D-galactosyl-(1-&gt;4)-N-acetyl-beta-D-glucosaminyl-(1-&gt;3)-beta-D-galactosyl-(1-&gt;4)-beta-D-glucosyl-(1&lt;-&gt;1')-ceramide + GDP-beta-L-fucose = a neolactoside IV(3)-alpha-Gal,III(3)-alpha-Fuc-nLc4Cer + GDP + H(+). It carries out the reaction a neolactoside nLc4Cer + GDP-beta-L-fucose = a neolactoside III(3)-alpha-Fuc-nLc4Cer + GDP + H(+). The enzyme catalyses an N-acetyl-alpha-neuraminyl-(2-&gt;3)-beta-D-galactosyl-(1-&gt;4)-N-acetyl-beta-D-glucosaminyl derivative + GDP-beta-L-fucose = an alpha-Neu5Ac-(2-&gt;3)-beta-D-Gal-(1-&gt;4)-[alpha-L-Fuc-(1-&gt;3)]-beta-D-GlcNAc derivative + GDP + H(+). The catalysed reaction is beta-D-Gal-(1-&gt;4)-beta-D-GlcNAc-(1-&gt;3)-beta-D-Gal-(1-&gt;4)-D-Glc + GDP-beta-L-fucose = beta-D-Gal-(1-&gt;4)-[alpha-L-Fuc-(1-&gt;3)]-beta-D-GlcNAc-(1-&gt;3)-beta-D-Gal-(1-&gt;4)-D-Glc + GDP + H(+). It catalyses the reaction an alpha-L-Fuc-(1-&gt;2)-beta-D-Gal-(1-&gt;4)-beta-D-GlcNAc derivative + GDP-beta-L-fucose = an alpha-L-Fuc-(1-&gt;2)-beta-D-Gal-(1-&gt;4)-[alpha-L-Fuc-(1-&gt;3)]-beta-D-GlcNAc derivative + GDP + H(+). Its pathway is protein modification; protein glycosylation. It participates in glycolipid biosynthesis. With respect to regulation, activated by Mn2+. Functionally, catalyzes alpha(1-&gt;3) linkage of fucosyl moiety transferred from GDP-beta-L-fucose to N-acetyl glucosamine (GlcNAc) within type 2 lactosamine (LacNAc, beta-D-Gal-(1-&gt;4)-beta-D-GlcNAc-) glycan attached to glycolipids and N- or O-linked glycoproteins. Fucosylates distal type 2 LacNAc and its fucosylated (H-type 2 LacNAc) and sialylated (sialyl-type 2 LacNAc) derivatives to form Lewis x (Lex) (CD15) and Lewis y (Ley) antigenic epitopes involved in cell adhesion and differentiation. Generates Lex epitopes in the brain, presumably playing a role in the maintenance of neuronal stemness and neurite outgrowth in progenitor neural cells. Fucosylates the internal type 2 LacNAc unit of the polylactosamine chain to form VIM-2 antigen that serves as recognition epitope for SELE. Can also modify milk oligosaccharides in particular type 2 tetrasaccharide LNnT. This is 4-galactosyl-N-acetylglucosaminide 3-alpha-L-fucosyltransferase 9 from Canis lupus familiaris (Dog).